The sequence spans 1108 residues: Alpha-mannosidase 2 (1108 aa).

The Cytoplasmic portion of the chain corresponds to 1–9 (MLRIRRRFA). The helical; Signal-anchor for type II membrane protein transmembrane segment at 10–30 (LVICSGCLLVFLSLYIILNFA) threads the bilayer. The Lumenal segment spans residues 31–1108 (APAATQIKPN…TAAYVSSHSS (1078 aa)). Positions 70-92 (AETSNRDDPIRPPLKVARSPRPG) are disordered. Zn(2+) is bound by residues His-153, Asp-155, Asp-267, and His-534. Asp-267 functions as the Nucleophile in the catalytic mechanism.

The protein belongs to the glycosyl hydrolase 38 family. In terms of assembly, homodimer; disulfide-linked. The cofactor is Zn(2+).

It is found in the golgi apparatus membrane. It carries out the reaction N(4)-{beta-D-GlcNAc-(1-&gt;2)-alpha-D-Man-(1-&gt;3)-[alpha-D-Man-(1-&gt;3)-[alpha-D-Man-(1-&gt;6)]-alpha-D-Man-(1-&gt;6)]-beta-D-Man-(1-&gt;4)-beta-D-GlcNAc-(1-&gt;4)-beta-D-GlcNAc}-L-asparaginyl-[protein] + 2 H2O = 2 alpha-D-mannopyranose + an N(4)-{beta-D-GlcNAc-(1-&gt;2)-alpha-D-Man-(1-&gt;3)-[alpha-D-Man-(1-&gt;6)]-beta-D-Man-(1-&gt;4)-beta-D-GlcNAc-(1-&gt;4)-beta-D-GlcNAc}-L-asparaginyl-[protein]. Its pathway is protein modification; protein glycosylation. Its function is as follows. Catalyzes the first committed step in the biosynthesis of complex N-glycans. It controls conversion of high mannose to complex N-glycans; the final hydrolytic step in the N-glycan maturation pathway. The sequence is that of Alpha-mannosidase 2 from Drosophila melanogaster (Fruit fly).